Consider the following 553-residue polypeptide: Phosphoenolpyruvate carboxykinase (ATP) (553 aa).

Residues 1-22 are disordered; the sequence is MAPPTAVGSSINFEGHPTIKST. 255–262 is a binding site for ATP; it reads GLSGTGKT.

This sequence belongs to the phosphoenolpyruvate carboxykinase (ATP) family.

It catalyses the reaction oxaloacetate + ATP = phosphoenolpyruvate + ADP + CO2. Its pathway is carbohydrate biosynthesis; gluconeogenesis. This Candida albicans (Yeast) protein is Phosphoenolpyruvate carboxykinase (ATP) (PCK1).